The sequence spans 446 residues: Glutamate-1-semialdehyde 2,1-aminomutase (446 aa).

N6-(pyridoxal phosphate)lysine is present on Lys-278.

This sequence belongs to the class-III pyridoxal-phosphate-dependent aminotransferase family. HemL subfamily. As to quaternary structure, homodimer. The cofactor is pyridoxal 5'-phosphate.

Its subcellular location is the cytoplasm. It carries out the reaction (S)-4-amino-5-oxopentanoate = 5-aminolevulinate. It participates in porphyrin-containing compound metabolism; protoporphyrin-IX biosynthesis; 5-aminolevulinate from L-glutamyl-tRNA(Glu): step 2/2. The polypeptide is Glutamate-1-semialdehyde 2,1-aminomutase (Deinococcus geothermalis (strain DSM 11300 / CIP 105573 / AG-3a)).